A 366-amino-acid chain; its full sequence is Pectinesterase A (366 aa).

Positions 1-24 are cleaved as a signal peptide; sequence MLKTISGTLALSLIIAASVHQAQA. Substrate-binding residues include Thr109 and Gln153. Asp178 acts as the Proton donor in catalysis. A disulfide bond links Cys192 and Cys212. Asp199 functions as the Nucleophile in the catalytic mechanism. Substrate-binding residues include Arg219, Asn226, Tyr230, Arg267, Trp269, and Thr272.

The protein belongs to the pectinesterase family. As to quaternary structure, monomer.

It is found in the secreted. The enzyme catalyses [(1-&gt;4)-alpha-D-galacturonosyl methyl ester](n) + n H2O = [(1-&gt;4)-alpha-D-galacturonosyl](n) + n methanol + n H(+). Its pathway is glycan metabolism; pectin degradation; 2-dehydro-3-deoxy-D-gluconate from pectin: step 1/5. Involved in maceration and soft-rotting of plant tissue. This is Pectinesterase A (pemA) from Dickeya chrysanthemi (Pectobacterium chrysanthemi).